A 434-amino-acid polypeptide reads, in one-letter code: Serine--tRNA ligase (434 aa).

230 to 232 (TSE) lines the L-serine pocket. ATP contacts are provided by residues 261–263 (RRE) and Val-277. L-serine is bound at residue Glu-284. 348 to 351 (ELTS) provides a ligand contact to ATP. Thr-393 lines the L-serine pocket.

It belongs to the class-II aminoacyl-tRNA synthetase family. Type-1 seryl-tRNA synthetase subfamily. As to quaternary structure, homodimer. The tRNA molecule binds across the dimer.

Its subcellular location is the cytoplasm. The catalysed reaction is tRNA(Ser) + L-serine + ATP = L-seryl-tRNA(Ser) + AMP + diphosphate + H(+). The enzyme catalyses tRNA(Sec) + L-serine + ATP = L-seryl-tRNA(Sec) + AMP + diphosphate + H(+). It functions in the pathway aminoacyl-tRNA biosynthesis; selenocysteinyl-tRNA(Sec) biosynthesis; L-seryl-tRNA(Sec) from L-serine and tRNA(Sec): step 1/1. Functionally, catalyzes the attachment of serine to tRNA(Ser). Is also able to aminoacylate tRNA(Sec) with serine, to form the misacylated tRNA L-seryl-tRNA(Sec), which will be further converted into selenocysteinyl-tRNA(Sec). In Kocuria rhizophila (strain ATCC 9341 / DSM 348 / NBRC 103217 / DC2201), this protein is Serine--tRNA ligase.